The following is a 406-amino-acid chain: [Pyruvate dehydrogenase (acetyl-transferring)] kinase isozyme 3, mitochondrial (406 aa).

The Histidine kinase domain occupies 131 to 362 (IEYKEKFGFD…DAVIYLKALS (232 aa)). Residue 247 to 254 (ELFKNSMR) coordinates ATP. Lysine 278 bears the N6-succinyllysine mark. ATP contacts are provided by residues aspartate 287, 306 to 307 (ST), and 323 to 328 (GFGYGL). Positions 383–406 (TPEADDWSNPSSEPRDASKYKAKQ) are disordered. The segment covering 395 to 406 (EPRDASKYKAKQ) has biased composition (basic and acidic residues).

It belongs to the PDK/BCKDK protein kinase family. As to quaternary structure, homodimer. Interacts with the pyruvate dehydrogenase complex subunit DLAT, and is part of the multimeric pyruvate dehydrogenase complex that contains multiple copies of pyruvate dehydrogenase (E1), dihydrolipoamide acetyltransferase (DLAT, E2) and lipoamide dehydrogenase (DLD, E3). Expressed in heart, skeletal muscle, spinal cord, as well as fetal and adult brain.

The protein localises to the mitochondrion matrix. It carries out the reaction L-seryl-[pyruvate dehydrogenase E1 alpha subunit] + ATP = O-phospho-L-seryl-[pyruvate dehydrogenase E1 alpha subunit] + ADP + H(+). Activated by interaction with DLAT. Inhibited by AZD7545, dichloroacetate and radicicol. In terms of biological role, inhibits pyruvate dehydrogenase activity by phosphorylation of the E1 subunit PDHA1, and thereby regulates glucose metabolism and aerobic respiration. Can also phosphorylate PDHA2. Decreases glucose utilization and increases fat metabolism in response to prolonged fasting, and as adaptation to a high-fat diet. Plays a role in glucose homeostasis and in maintaining normal blood glucose levels in function of nutrient levels and under starvation. Plays a role in the generation of reactive oxygen species. This Homo sapiens (Human) protein is [Pyruvate dehydrogenase (acetyl-transferring)] kinase isozyme 3, mitochondrial (PDK3).